Here is a 202-residue protein sequence, read N- to C-terminus: Na(+)-translocating NADH-quinone reductase subunit E (202 aa).

6 consecutive transmembrane segments (helical) span residues 11-31 (SIFI…YLAV), 39-59 (MGLG…NNLL), 79-99 (LTFV…QILE), 114-134 (GIFL…LFMV), 144-164 (VTFG…LAGI), and 180-200 (LGIT…FSGI).

This sequence belongs to the NqrDE/RnfAE family. As to quaternary structure, composed of six subunits; NqrA, NqrB, NqrC, NqrD, NqrE and NqrF.

It localises to the cell inner membrane. It carries out the reaction a ubiquinone + n Na(+)(in) + NADH + H(+) = a ubiquinol + n Na(+)(out) + NAD(+). In terms of biological role, NQR complex catalyzes the reduction of ubiquinone-1 to ubiquinol by two successive reactions, coupled with the transport of Na(+) ions from the cytoplasm to the periplasm. NqrA to NqrE are probably involved in the second step, the conversion of ubisemiquinone to ubiquinol. The polypeptide is Na(+)-translocating NADH-quinone reductase subunit E (Maridesulfovibrio salexigens (strain ATCC 14822 / DSM 2638 / NCIMB 8403 / VKM B-1763) (Desulfovibrio salexigens)).